Reading from the N-terminus, the 223-residue chain is Putative 3-methyladenine DNA glycosylase (223 aa).

This sequence belongs to the DNA glycosylase MPG family.

The polypeptide is Putative 3-methyladenine DNA glycosylase (Pseudomonas syringae pv. tomato (strain ATCC BAA-871 / DC3000)).